Reading from the N-terminus, the 134-residue chain is Small ribosomal subunit protein uS8 (134 aa).

This sequence belongs to the universal ribosomal protein uS8 family. In terms of assembly, part of the 30S ribosomal subunit. Contacts proteins S5 and S12.

In terms of biological role, one of the primary rRNA binding proteins, it binds directly to 16S rRNA central domain where it helps coordinate assembly of the platform of the 30S subunit. The protein is Small ribosomal subunit protein uS8 of Nitratiruptor sp. (strain SB155-2).